Here is a 379-residue protein sequence, read N- to C-terminus: 1-deoxy-D-xylulose 5-phosphate reductoisomerase (379 aa).

Positions 10, 11, 12, 13, 39, and 121 each coordinate NADPH. Lys-122 provides a ligand contact to 1-deoxy-D-xylulose 5-phosphate. Glu-123 serves as a coordination point for NADPH. Asp-147 is a binding site for Mn(2+). 4 residues coordinate 1-deoxy-D-xylulose 5-phosphate: Ser-148, Glu-149, Ser-173, and His-196. Residue Glu-149 coordinates Mn(2+). Position 202 (Gly-202) interacts with NADPH. 1-deoxy-D-xylulose 5-phosphate is bound by residues Ser-209, Asn-214, Lys-215, and Glu-218. Glu-218 lines the Mn(2+) pocket.

Belongs to the DXR family. Mg(2+) serves as cofactor. Mn(2+) is required as a cofactor.

The enzyme catalyses 2-C-methyl-D-erythritol 4-phosphate + NADP(+) = 1-deoxy-D-xylulose 5-phosphate + NADPH + H(+). It participates in isoprenoid biosynthesis; isopentenyl diphosphate biosynthesis via DXP pathway; isopentenyl diphosphate from 1-deoxy-D-xylulose 5-phosphate: step 1/6. Catalyzes the NADPH-dependent rearrangement and reduction of 1-deoxy-D-xylulose-5-phosphate (DXP) to 2-C-methyl-D-erythritol 4-phosphate (MEP). The sequence is that of 1-deoxy-D-xylulose 5-phosphate reductoisomerase from Chlamydia pneumoniae (Chlamydophila pneumoniae).